A 472-amino-acid polypeptide reads, in one-letter code: 3-isopropylmalate dehydratase large subunit (472 aa).

C351, C412, and C415 together coordinate [4Fe-4S] cluster.

Belongs to the aconitase/IPM isomerase family. LeuC type 1 subfamily. As to quaternary structure, heterodimer of LeuC and LeuD. [4Fe-4S] cluster is required as a cofactor.

The catalysed reaction is (2R,3S)-3-isopropylmalate = (2S)-2-isopropylmalate. It functions in the pathway amino-acid biosynthesis; L-leucine biosynthesis; L-leucine from 3-methyl-2-oxobutanoate: step 2/4. Catalyzes the isomerization between 2-isopropylmalate and 3-isopropylmalate, via the formation of 2-isopropylmaleate. The protein is 3-isopropylmalate dehydratase large subunit of Marinobacter nauticus (strain ATCC 700491 / DSM 11845 / VT8) (Marinobacter aquaeolei).